A 357-amino-acid polypeptide reads, in one-letter code: Thiamine thiazole synthase, chloroplastic (357 aa).

Substrate-binding positions include Ala102, 123 to 124, Gly131, and Val196; that span reads EQ. 2,3-didehydroalanine (Cys) is present on Cys233. Residues Asp235, His250, Met304, and 314–316 contribute to the substrate site; that span reads RMG.

This sequence belongs to the THI4 family. In terms of assembly, homooctamer. Fe cation serves as cofactor. During the catalytic reaction, a sulfide is transferred from Cys-233 to a reaction intermediate, generating a dehydroalanine residue.

The protein localises to the plastid. It localises to the chloroplast. The catalysed reaction is [ADP-thiazole synthase]-L-cysteine + glycine + NAD(+) = [ADP-thiazole synthase]-dehydroalanine + ADP-5-ethyl-4-methylthiazole-2-carboxylate + nicotinamide + 3 H2O + 2 H(+). Functionally, involved in biosynthesis of the thiamine precursor thiazole. Catalyzes the conversion of NAD and glycine to adenosine diphosphate 5-(2-hydroxyethyl)-4-methylthiazole-2-carboxylic acid (ADT), an adenylated thiazole intermediate. The reaction includes an iron-dependent sulfide transfer from a conserved cysteine residue of the protein to a thiazole intermediate. The enzyme can only undergo a single turnover, which suggests it is a suicide enzyme. May have additional roles in adaptation to various stress conditions and in DNA damage tolerance. The polypeptide is Thiamine thiazole synthase, chloroplastic (Chlamydomonas reinhardtii (Chlamydomonas smithii)).